A 141-amino-acid chain; its full sequence is Nucleoside diphosphate kinase (141 aa).

The ATP site is built by Lys11, Phe59, Arg87, Thr93, Arg104, and Asn114. His117 functions as the Pros-phosphohistidine intermediate in the catalytic mechanism.

This sequence belongs to the NDK family. As to quaternary structure, homotetramer. Mg(2+) serves as cofactor.

Its subcellular location is the cytoplasm. The enzyme catalyses a 2'-deoxyribonucleoside 5'-diphosphate + ATP = a 2'-deoxyribonucleoside 5'-triphosphate + ADP. It catalyses the reaction a ribonucleoside 5'-diphosphate + ATP = a ribonucleoside 5'-triphosphate + ADP. Its function is as follows. Major role in the synthesis of nucleoside triphosphates other than ATP. The ATP gamma phosphate is transferred to the NDP beta phosphate via a ping-pong mechanism, using a phosphorylated active-site intermediate. The sequence is that of Nucleoside diphosphate kinase from Xanthomonas axonopodis pv. citri (strain 306).